Reading from the N-terminus, the 297-residue chain is Acetaldehyde dehydrogenase (297 aa).

15 to 18 (SGSI) contacts NAD(+). The active-site Acyl-thioester intermediate is Cys-130. Residues 162–170 (SAGIATREN) and Asn-272 contribute to the NAD(+) site.

The protein belongs to the acetaldehyde dehydrogenase family.

It catalyses the reaction acetaldehyde + NAD(+) + CoA = acetyl-CoA + NADH + H(+). The polypeptide is Acetaldehyde dehydrogenase (mhpF) (Burkholderia thailandensis (strain ATCC 700388 / DSM 13276 / CCUG 48851 / CIP 106301 / E264)).